A 150-amino-acid polypeptide reads, in one-letter code: Large ribosomal subunit protein bL9 (150 aa).

It belongs to the bacterial ribosomal protein bL9 family.

Functionally, binds to the 23S rRNA. The chain is Large ribosomal subunit protein bL9 from Shewanella sediminis (strain HAW-EB3).